The following is a 129-amino-acid chain: Small ribosomal subunit protein uS11 (129 aa).

Belongs to the universal ribosomal protein uS11 family. As to quaternary structure, part of the 30S ribosomal subunit. Interacts with proteins S7 and S18. Binds to IF-3.

Located on the platform of the 30S subunit, it bridges several disparate RNA helices of the 16S rRNA. Forms part of the Shine-Dalgarno cleft in the 70S ribosome. The protein is Small ribosomal subunit protein uS11 of Bradyrhizobium sp. (strain ORS 278).